Consider the following 79-residue polypeptide: Small serum protein 3 (79 aa).

A signal peptide spans 1–19; sequence MKVFFILIIFSFTLATCQG. Cystine bridges form between C21–C72, C39–C64, and C62–C71.

The protein resides in the secreted. Shows an slight inhibitory effect toward the metalloproteinase brevilysin H6, but does not inhibit the metalloproteinases thermolysin, HR1A and HR1B. This chain is Small serum protein 3, found in Protobothrops flavoviridis (Habu).